A 250-amino-acid polypeptide reads, in one-letter code: HTH-type transcriptional regulator SarS (250 aa).

2 consecutive DNA-binding regions (H-T-H motif) follow at residues 53–76 (FKKIVSDLCYKQSDLVQHIKVLVK) and 177–200 (LKDLIETIHHKYPQTVRALNNLKK).

Belongs to the SarA family.

Its subcellular location is the cytoplasm. Functionally, transcriptional regulator that controls expression of some virulence factors in a cell density-dependent manner. The polypeptide is HTH-type transcriptional regulator SarS (sarS) (Staphylococcus aureus (strain MRSA252)).